The chain runs to 151 residues: 3-dehydroquinate dehydratase (151 aa).

Tyrosine 26 acts as the Proton acceptor in catalysis. Residues asparagine 75, histidine 81, and aspartate 88 each contribute to the substrate site. The active-site Proton donor is histidine 101. Substrate is bound by residues 102-103 (LS) and arginine 112.

This sequence belongs to the type-II 3-dehydroquinase family. In terms of assembly, homododecamer.

It catalyses the reaction 3-dehydroquinate = 3-dehydroshikimate + H2O. Its pathway is metabolic intermediate biosynthesis; chorismate biosynthesis; chorismate from D-erythrose 4-phosphate and phosphoenolpyruvate: step 3/7. Catalyzes a trans-dehydration via an enolate intermediate. The polypeptide is 3-dehydroquinate dehydratase (Shewanella halifaxensis (strain HAW-EB4)).